The primary structure comprises 1302 residues: Cingulin-like protein 1 (1302 aa).

The segment at 1 to 554 (MELYFGEYQH…ELTQQTNEET (554 aa)) is head. Positions 37-51 (AGSYGVSIRVQGIDG) match the ZIM motif. The disordered stretch occupies residues 75-104 (PFPPPVINNLPLHSSNGSVPKENSEELQLP). Serine 112 and serine 202 each carry phosphoserine. Disordered stretches follow at residues 186–209 (KKPW…EDPA), 251–305 (FTSG…TPTS), and 364–392 (PGLQ…VDSA). Over residues 195–204 (PSNSQPTSPS) the composition is skewed to polar residues. Basic and acidic residues predominate over residues 264–282 (AHPETKKTRPDVLPFRRQD). A phosphoserine mark is found at serine 283, serine 297, and serine 298. Over residues 296 to 305 (SSSSSTTPTS) the composition is skewed to low complexity. The segment covering 366–377 (LQRRGRSGKRNR) has biased composition (basic residues). The span at 378–388 (INTDDRKRSRS) shows a compositional bias: basic and acidic residues. A phosphoserine mark is found at serine 388, serine 391, and serine 486. Positions 604-1258 (NSTSEVKDLL…QLNSMKKDLR (655 aa)) form a coiled coil. Residues 655-664 (RSQHNEKVEE) show a composition bias toward basic and acidic residues. A disordered region spans residues 655–675 (RSQHNEKVEENSTLQQRLEES). Serine 708 is subject to Phosphoserine. Disordered regions lie at residues 903–929 (AAQG…SEQK) and 1263–1287 (PSKV…YEAP). The segment covering 917–929 (QLSEKLKEESEQK) has biased composition (basic and acidic residues). Residues 1263 to 1302 (PSKVLDDMDDDDDLSTDGGSLYEAPVSYTFSKDSTVASQI) are tail.

This sequence belongs to the cingulin family. In terms of assembly, homodimer or oligomer. Interacts with CD2AP and SH3BP1; probably part of a complex at cell junctions. Smooth muscle, spleen, testis, fetal brain, amygdala, corpus callosum, cerebellum, thalamus and subthalamic nucleus of adult brain.

It is found in the cell junction. The protein localises to the tight junction. In terms of biological role, may be involved in anchoring the apical junctional complex, especially tight junctions, to actin-based cytoskeletons. This is Cingulin-like protein 1 (CGNL1) from Homo sapiens (Human).